Here is a 381-residue protein sequence, read N- to C-terminus: Spindlin interactor and repressor of chromatin-binding protein (381 aa).

The segment at 42-73 is disordered; it reads RVTQQEKTPPPRPSPLEAGSDGCEEPKQQVSW. A Glycyl lysine isopeptide (Lys-Gly) (interchain with G-Cter in SUMO2) cross-link involves residue Lys48. Ser121 and Ser148 each carry phosphoserine. 3 disordered regions span residues 144–264, 283–320, and 339–381; these read AEQP…EVRH, QLRG…LRGT, and LQDW…GNGV. Glycyl lysine isopeptide (Lys-Gly) (interchain with G-Cter in SUMO2) cross-links involve residues Lys189 and Lys220. Residues 218–228 show a composition bias toward basic and acidic residues; that stretch reads RWKEPPGEEPV. Ser248 and Ser251 each carry phosphoserine. Over residues 287–299 the composition is skewed to basic and acidic residues; sequence PDSKDSPKDREVA. Glycyl lysine isopeptide (Lys-Gly) (interchain with G-Cter in SUMO2) cross-links involve residues Lys290 and Lys294. 2 positions are modified to phosphoserine: Ser308 and Ser310. Lys374 participates in a covalent cross-link: Glycyl lysine isopeptide (Lys-Gly) (interchain with G-Cter in SUMO2).

In terms of assembly, interacts with SPIN1, SPIN2A, SPIN2B, SPIN3 and SPIN4. Interacts with TCF7L2 in a SPIN1-dependent manner. Interacts with PARP1; promoting PARP1 ADP-ribosyltransferase activity.

The protein localises to the nucleus. Its subcellular location is the chromosome. Chromatin protein that stabilizes SPIN1 and enhances its association with histone H3 trimethylated at both 'Lys-4' and 'Lys-9' (H3K4me3K9me3). Positively regulates poly-ADP-ribosylation in response to DNA damage; acts by facilitating PARP1 ADP-ribosyltransferase activity. This is Spindlin interactor and repressor of chromatin-binding protein from Homo sapiens (Human).